The following is a 577-amino-acid chain: Proline--tRNA ligase (577 aa).

Belongs to the class-II aminoacyl-tRNA synthetase family. ProS type 1 subfamily. As to quaternary structure, homodimer.

The protein localises to the cytoplasm. The catalysed reaction is tRNA(Pro) + L-proline + ATP = L-prolyl-tRNA(Pro) + AMP + diphosphate. Functionally, catalyzes the attachment of proline to tRNA(Pro) in a two-step reaction: proline is first activated by ATP to form Pro-AMP and then transferred to the acceptor end of tRNA(Pro). As ProRS can inadvertently accommodate and process non-cognate amino acids such as alanine and cysteine, to avoid such errors it has two additional distinct editing activities against alanine. One activity is designated as 'pretransfer' editing and involves the tRNA(Pro)-independent hydrolysis of activated Ala-AMP. The other activity is designated 'posttransfer' editing and involves deacylation of mischarged Ala-tRNA(Pro). The misacylated Cys-tRNA(Pro) is not edited by ProRS. The polypeptide is Proline--tRNA ligase (Helicobacter pylori (strain HPAG1)).